The primary structure comprises 237 residues: Uridylate kinase (237 aa).

Residue 13 to 16 (KLSG) coordinates ATP. Residue glycine 53 coordinates UMP. Residues glycine 54 and arginine 58 each coordinate ATP. Residues aspartate 73 and 134–141 (AGLPYFST) contribute to the UMP site. Residues asparagine 162, tyrosine 168, and aspartate 171 each contribute to the ATP site.

Belongs to the UMP kinase family. Homohexamer.

Its subcellular location is the cytoplasm. The catalysed reaction is UMP + ATP = UDP + ADP. It functions in the pathway pyrimidine metabolism; CTP biosynthesis via de novo pathway; UDP from UMP (UMPK route): step 1/1. With respect to regulation, inhibited by UTP. Functionally, catalyzes the reversible phosphorylation of UMP to UDP. In Leifsonia xyli subsp. xyli (strain CTCB07), this protein is Uridylate kinase.